Reading from the N-terminus, the 371-residue chain is 4-hydroxy-3-methylbut-2-en-1-yl diphosphate synthase (flavodoxin) (371 aa).

[4Fe-4S] cluster contacts are provided by Cys-270, Cys-273, Cys-305, and Glu-312.

The protein belongs to the IspG family. [4Fe-4S] cluster serves as cofactor.

The catalysed reaction is (2E)-4-hydroxy-3-methylbut-2-enyl diphosphate + oxidized [flavodoxin] + H2O + 2 H(+) = 2-C-methyl-D-erythritol 2,4-cyclic diphosphate + reduced [flavodoxin]. Its pathway is isoprenoid biosynthesis; isopentenyl diphosphate biosynthesis via DXP pathway; isopentenyl diphosphate from 1-deoxy-D-xylulose 5-phosphate: step 5/6. In terms of biological role, converts 2C-methyl-D-erythritol 2,4-cyclodiphosphate (ME-2,4cPP) into 1-hydroxy-2-methyl-2-(E)-butenyl 4-diphosphate. This is 4-hydroxy-3-methylbut-2-en-1-yl diphosphate synthase (flavodoxin) from Shewanella frigidimarina (strain NCIMB 400).